Here is a 178-residue protein sequence, read N- to C-terminus: Small ribosomal subunit protein uS5 (178 aa).

The 64-residue stretch at 17 to 80 (FEERIVEIRR…AAARASVVEI (64 aa)) folds into the S5 DRBM domain.

The protein belongs to the universal ribosomal protein uS5 family. In terms of assembly, part of the 30S ribosomal subunit. Contacts proteins S4 and S8.

With S4 and S12 plays an important role in translational accuracy. Its function is as follows. Located at the back of the 30S subunit body where it stabilizes the conformation of the head with respect to the body. The polypeptide is Small ribosomal subunit protein uS5 (Pseudothermotoga lettingae (strain ATCC BAA-301 / DSM 14385 / NBRC 107922 / TMO) (Thermotoga lettingae)).